A 785-amino-acid polypeptide reads, in one-letter code: Endonuclease MutS2 (785 aa).

ATP is bound at residue 332-339 (GPNTGGKT). The region spanning 710-785 (VDLRGMDSEE…GNGVTVVELK (76 aa)) is the Smr domain.

The protein belongs to the DNA mismatch repair MutS family. MutS2 subfamily. Homodimer. Binds to stalled ribosomes, contacting rRNA.

Endonuclease that is involved in the suppression of homologous recombination and thus may have a key role in the control of bacterial genetic diversity. In terms of biological role, acts as a ribosome collision sensor, splitting the ribosome into its 2 subunits. Detects stalled/collided 70S ribosomes which it binds and splits by an ATP-hydrolysis driven conformational change. Acts upstream of the ribosome quality control system (RQC), a ribosome-associated complex that mediates the extraction of incompletely synthesized nascent chains from stalled ribosomes and their subsequent degradation. Probably generates substrates for RQC. In Clostridium novyi (strain NT), this protein is Endonuclease MutS2.